The following is a 218-amino-acid chain: Large ribosomal subunit protein uL3 (218 aa).

The interval 126–169 (HGFSRGPMTHGSKNHRQPGSIGAGTTPGRIYPGKRMSGRYGGKK) is disordered.

The protein belongs to the universal ribosomal protein uL3 family. In terms of assembly, part of the 50S ribosomal subunit. Forms a cluster with proteins L14 and L19.

Its function is as follows. One of the primary rRNA binding proteins, it binds directly near the 3'-end of the 23S rRNA, where it nucleates assembly of the 50S subunit. In Synechococcus sp. (strain CC9902), this protein is Large ribosomal subunit protein uL3.